The following is a 246-amino-acid chain: Probable phosphatase PBPRB2022 (246 aa).

Zn(2+) contacts are provided by His8, His10, His16, His41, Glu74, His102, His132, Asp193, and His195.

This sequence belongs to the PHP family. Requires Zn(2+) as cofactor.

The polypeptide is Probable phosphatase PBPRB2022 (Photobacterium profundum (strain SS9)).